The primary structure comprises 143 residues: Nucleoside diphosphate kinase (143 aa).

ATP is bound by residues K11, F59, R87, T93, R104, and N114. Residue H117 is the Pros-phosphohistidine intermediate of the active site.

It belongs to the NDK family. As to quaternary structure, homotetramer. The cofactor is Mg(2+).

Its subcellular location is the cytoplasm. It catalyses the reaction a 2'-deoxyribonucleoside 5'-diphosphate + ATP = a 2'-deoxyribonucleoside 5'-triphosphate + ADP. The catalysed reaction is a ribonucleoside 5'-diphosphate + ATP = a ribonucleoside 5'-triphosphate + ADP. In terms of biological role, major role in the synthesis of nucleoside triphosphates other than ATP. The ATP gamma phosphate is transferred to the NDP beta phosphate via a ping-pong mechanism, using a phosphorylated active-site intermediate. This chain is Nucleoside diphosphate kinase, found in Edwardsiella ictaluri (strain 93-146).